The primary structure comprises 300 residues: Rhodopsin (300 aa).

Residues 1–18 (LHMIHLHWYQYPPMNPMM) are Extracellular-facing. A helical transmembrane segment spans residues 19–43 (YPLLLVFMLITGILCLAGNFVTIWV). Residues 44–55 (FMNTKSLRTPAN) lie on the Cytoplasmic side of the membrane. The helical transmembrane segment at 56-78 (LLVVNLAMSDFLMMFTMFPPMMV) threads the bilayer. Residues 79–92 (TCYYHTWTLGATFC) lie on the Extracellular side of the membrane. A disulfide bridge connects residues C92 and C168. The helical transmembrane segment at 93–115 (QVYAFLGNLCGCASIWTMVFITF) threads the bilayer. A 'Ionic lock' involved in activated form stabilization motif is present at residues 116–118 (DRY). At 116–134 (DRYNVIVKGVAGEPLSTKK) the chain is on the cytoplasmic side. Residues 135–155 (ASLWILTIWILSITWCIAPFF) form a helical membrane-spanning segment. Over 156–181 (GWNRYVPEGNTGCGTDYLSEDILSRS) the chain is Extracellular. The chain crosses the membrane as a helical span at residues 182–203 (YLYIYSTWVYFLPLAITIYCHV). Over 204–244 (FIIKAVAAHEKGMRDQAKKMGIKSLRNEEAQKTSAECRLAK) the chain is Cytoplasmic. The chain crosses the membrane as a helical span at residues 245–266 (IAMTTVALWFIAWTPYLLINWV). Residues 267 to 277 (GMFARSYLSPV) are Extracellular-facing. Residues 278–299 (YTIWGYVFAKANAVYNPIVYAI) form a helical membrane-spanning segment. An N6-(retinylidene)lysine modification is found at K287.

It belongs to the G-protein coupled receptor 1 family. Opsin subfamily. As to quaternary structure, homodimer. Interacts with GNAQ. Post-translationally, contains one covalently linked retinal chromophore.

It is found in the cell projection. Its subcellular location is the rhabdomere membrane. In terms of biological role, photoreceptor required for image-forming vision at low light intensity. Can use both retinal and 3-dehydroretinal as visual pigment. Light-induced isomerization of 11-cis to all-trans retinal triggers a conformational change that activates signaling via G-proteins. Signaling via GNAQ probably mediates the activation of phospholipase C. The protein is Rhodopsin (RHO) of Cambarus maculatus (Freckled crayfish).